The chain runs to 136 residues: Transcription antitermination protein NusB (136 aa).

This sequence belongs to the NusB family.

Involved in transcription antitermination. Required for transcription of ribosomal RNA (rRNA) genes. Binds specifically to the boxA antiterminator sequence of the ribosomal RNA (rrn) operons. The polypeptide is Transcription antitermination protein NusB (Treponema denticola (strain ATCC 35405 / DSM 14222 / CIP 103919 / JCM 8153 / KCTC 15104)).